Here is an 84-residue protein sequence, read N- to C-terminus: Toxin To10 (84 aa).

Positions 1-19 (MNYSTLIAVASLLTAGTES) are cleaved as a signal peptide. The LCN-type CS-alpha/beta domain occupies 21-80 (KDGYPVEGSCAFPCGYDNAYCDKLCKERKADSGYCYWVNILCYCYGLPDNAAIKGYGRCK). Cystine bridges form between cysteine 30/cysteine 79, cysteine 34/cysteine 55, cysteine 41/cysteine 62, and cysteine 45/cysteine 64. Proline 81 carries the post-translational modification Proline amide.

Belongs to the long (4 C-C) scorpion toxin superfamily. Sodium channel inhibitor family. Alpha subfamily. As to expression, expressed by the venom gland.

Its subcellular location is the secreted. Alpha toxins bind voltage-independently at site-3 of sodium channels (Nav) and inhibit the inactivation of the activated channels, thereby blocking neuronal transmission. In Tityus obscurus (Amazonian scorpion), this protein is Toxin To10.